Consider the following 303-residue polypeptide: RELT-like protein 2 (303 aa).

The helical transmembrane segment at 15–35 (LYMLFLLVLVFFLMGLVGFMI) threads the bilayer. Disordered regions lie at residues 46 to 67 (CRTSRGSEPDDAQLQPPEDDDM) and 111 to 303 (SSLQ…AGGV). Position 52 is a phosphoserine (Ser-52). 2 stretches are compositionally biased toward basic and acidic residues: residues 148-158 (RSKEGKSRPRP) and 172-188 (THIEKRYGLHEHRDGSP). Residues 194–212 (GSGGGQDPGGGQGPGGGQP) are compositionally biased toward gly residues.

The protein belongs to the RELT family. Interacts with RELT, RELL1, OXSR1, PLSCR1 and TRAF2.

Its subcellular location is the cell membrane. Induces activation of MAPK14/p38 cascade, when overexpressed. Induces apoptosis, when overexpressed. This is RELT-like protein 2 (RELL2) from Bos taurus (Bovine).